The primary structure comprises 404 residues: UBP1-associated protein 2C (404 aa).

Residues 1–29 (MDMMKKRKLDENGNGLNTNGGGTIGPTRL) form a disordered region. RRM domains are found at residues 75–152 (RKLF…LAAS) and 167–248 (RKIY…GKKG). 2 disordered regions span residues 246–270 (KKGG…HGEG) and 344–404 (GSGQ…PPNY).

Expressed in root apical and lateral meristems, young leaves and embryos.

The protein localises to the nucleus. Heterogeneous nuclear ribonucleoprotein (hnRNP)-like protein that acts as a component of a complex regulating the turnover of mRNAs in the nucleus. Binds with high affinity to RNA molecules that contain U-rich sequences in 3'-UTRs. May function in complex with UBP1 and contribute to the stabilization of mRNAs in the nucleus. The polypeptide is UBP1-associated protein 2C (UBA2C) (Arabidopsis thaliana (Mouse-ear cress)).